Reading from the N-terminus, the 289-residue chain is tRNA-cytidine(32) 2-sulfurtransferase (289 aa).

The PP-loop motif motif lies at 39–44; sequence SGGKDS. The [4Fe-4S] cluster site is built by cysteine 114, cysteine 117, and cysteine 205.

It belongs to the TtcA family. In terms of assembly, homodimer. The cofactor is Mg(2+). [4Fe-4S] cluster serves as cofactor.

The protein resides in the cytoplasm. The catalysed reaction is cytidine(32) in tRNA + S-sulfanyl-L-cysteinyl-[cysteine desulfurase] + AH2 + ATP = 2-thiocytidine(32) in tRNA + L-cysteinyl-[cysteine desulfurase] + A + AMP + diphosphate + H(+). It participates in tRNA modification. Catalyzes the ATP-dependent 2-thiolation of cytidine in position 32 of tRNA, to form 2-thiocytidine (s(2)C32). The sulfur atoms are provided by the cysteine/cysteine desulfurase (IscS) system. The protein is tRNA-cytidine(32) 2-sulfurtransferase of Deinococcus geothermalis (strain DSM 11300 / CIP 105573 / AG-3a).